The primary structure comprises 360 residues: 3-isopropylmalate dehydrogenase (360 aa).

76 to 89 is a binding site for NAD(+); the sequence is GPKWEPLDYSLRPE. Positions 96, 106, 134, and 224 each coordinate substrate. Positions 224, 248, and 252 each coordinate Mg(2+). 282–294 provides a ligand contact to NAD(+); sequence GSAPDIAGRGIAN.

The protein belongs to the isocitrate and isopropylmalate dehydrogenases family. LeuB type 1 subfamily. In terms of assembly, homodimer. Mg(2+) is required as a cofactor. Mn(2+) serves as cofactor.

It is found in the cytoplasm. The catalysed reaction is (2R,3S)-3-isopropylmalate + NAD(+) = 4-methyl-2-oxopentanoate + CO2 + NADH. It participates in amino-acid biosynthesis; L-leucine biosynthesis; L-leucine from 3-methyl-2-oxobutanoate: step 3/4. Catalyzes the oxidation of 3-carboxy-2-hydroxy-4-methylpentanoate (3-isopropylmalate) to 3-carboxy-4-methyl-2-oxopentanoate. The product decarboxylates to 4-methyl-2 oxopentanoate. This Methylococcus capsulatus (strain ATCC 33009 / NCIMB 11132 / Bath) protein is 3-isopropylmalate dehydrogenase.